We begin with the raw amino-acid sequence, 448 residues long: Probable glycine dehydrogenase (decarboxylating) subunit 1 (448 aa).

The protein belongs to the GcvP family. N-terminal subunit subfamily. As to quaternary structure, the glycine cleavage system is composed of four proteins: P, T, L and H. In this organism, the P 'protein' is a heterodimer of two subunits.

It catalyses the reaction N(6)-[(R)-lipoyl]-L-lysyl-[glycine-cleavage complex H protein] + glycine + H(+) = N(6)-[(R)-S(8)-aminomethyldihydrolipoyl]-L-lysyl-[glycine-cleavage complex H protein] + CO2. Functionally, the glycine cleavage system catalyzes the degradation of glycine. The P protein binds the alpha-amino group of glycine through its pyridoxal phosphate cofactor; CO(2) is released and the remaining methylamine moiety is then transferred to the lipoamide cofactor of the H protein. In Bacillus licheniformis (strain ATCC 14580 / DSM 13 / JCM 2505 / CCUG 7422 / NBRC 12200 / NCIMB 9375 / NCTC 10341 / NRRL NRS-1264 / Gibson 46), this protein is Probable glycine dehydrogenase (decarboxylating) subunit 1.